A 180-amino-acid chain; its full sequence is Cell division protein SepF (180 aa).

Residues 1–66 form a disordered region; the sequence is MAFSFKSFFG…NRNGFAYDNG (66 aa). Over residues 12–23 the composition is skewed to acidic residues; it reads ADDEEEEYEDSG. The span at 24–57 shows a compositional bias: low complexity; the sequence is YEQQPNQGQQQPVNSQQQNTSNQSYSGYNNQNQN.

The protein belongs to the SepF family. In terms of assembly, homodimer. Interacts with FtsZ.

Its subcellular location is the cytoplasm. Its function is as follows. Cell division protein that is part of the divisome complex and is recruited early to the Z-ring. Probably stimulates Z-ring formation, perhaps through the cross-linking of FtsZ protofilaments. Its function overlaps with FtsA. This is Cell division protein SepF from Oenococcus oeni (strain ATCC BAA-331 / PSU-1).